Reading from the N-terminus, the 1080-residue chain is DNA polymerase II large subunit (1080 aa).

This sequence belongs to the archaeal DNA polymerase II family. In terms of assembly, heterodimer of a large subunit and a small subunit.

The catalysed reaction is DNA(n) + a 2'-deoxyribonucleoside 5'-triphosphate = DNA(n+1) + diphosphate. The enzyme catalyses Exonucleolytic cleavage in the 3'- to 5'-direction to yield nucleoside 5'-phosphates.. In terms of biological role, possesses two activities: a DNA synthesis (polymerase) and an exonucleolytic activity that degrades single-stranded DNA in the 3'- to 5'-direction. Has a template-primer preference which is characteristic of a replicative DNA polymerase. The chain is DNA polymerase II large subunit from Picrophilus torridus (strain ATCC 700027 / DSM 9790 / JCM 10055 / NBRC 100828 / KAW 2/3).